Reading from the N-terminus, the 383-residue chain is UDP-N-acetylglucosamine--N-acetylmuramyl-(pentapeptide) pyrophosphoryl-undecaprenol N-acetylglucosamine transferase (383 aa).

Residues 11–13, asparagine 125, arginine 166, serine 191, isoleucine 246, and glutamine 291 contribute to the UDP-N-acetyl-alpha-D-glucosamine site; that span reads TGG. A disordered region spans residues 364–383; it reads PNGRERTPIEAEKKAPRSNS. Residues 366-383 are compositionally biased toward basic and acidic residues; sequence GRERTPIEAEKKAPRSNS.

It belongs to the glycosyltransferase 28 family. MurG subfamily.

Its subcellular location is the cell inner membrane. It carries out the reaction di-trans,octa-cis-undecaprenyl diphospho-N-acetyl-alpha-D-muramoyl-L-alanyl-D-glutamyl-meso-2,6-diaminopimeloyl-D-alanyl-D-alanine + UDP-N-acetyl-alpha-D-glucosamine = di-trans,octa-cis-undecaprenyl diphospho-[N-acetyl-alpha-D-glucosaminyl-(1-&gt;4)]-N-acetyl-alpha-D-muramoyl-L-alanyl-D-glutamyl-meso-2,6-diaminopimeloyl-D-alanyl-D-alanine + UDP + H(+). It participates in cell wall biogenesis; peptidoglycan biosynthesis. In terms of biological role, cell wall formation. Catalyzes the transfer of a GlcNAc subunit on undecaprenyl-pyrophosphoryl-MurNAc-pentapeptide (lipid intermediate I) to form undecaprenyl-pyrophosphoryl-MurNAc-(pentapeptide)GlcNAc (lipid intermediate II). This is UDP-N-acetylglucosamine--N-acetylmuramyl-(pentapeptide) pyrophosphoryl-undecaprenol N-acetylglucosamine transferase from Myxococcus xanthus (strain DK1622).